Consider the following 121-residue polypeptide: UPF0145 protein SAV_4658 (121 aa).

It belongs to the UPF0145 family.

The sequence is that of UPF0145 protein SAV_4658 from Streptomyces avermitilis (strain ATCC 31267 / DSM 46492 / JCM 5070 / NBRC 14893 / NCIMB 12804 / NRRL 8165 / MA-4680).